We begin with the raw amino-acid sequence, 227 residues long: Cytochrome c oxidase subunit 2 (227 aa).

At M1–S14 the chain is on the mitochondrial intermembrane side. The helical transmembrane segment at P15–M45 threads the bilayer. Topologically, residues L46–Q59 are mitochondrial matrix. A helical transmembrane segment spans residues E60 to M87. Topologically, residues D88–V227 are mitochondrial intermembrane. 6 residues coordinate Cu cation: H161, C196, E198, C200, H204, and M207. Position 198 (E198) interacts with Mg(2+). Residue Y218 is modified to Phosphotyrosine.

It belongs to the cytochrome c oxidase subunit 2 family. As to quaternary structure, component of the cytochrome c oxidase (complex IV, CIV), a multisubunit enzyme composed of 14 subunits. The complex is composed of a catalytic core of 3 subunits MT-CO1, MT-CO2 and MT-CO3, encoded in the mitochondrial DNA, and 11 supernumerary subunits COX4I, COX5A, COX5B, COX6A, COX6B, COX6C, COX7A, COX7B, COX7C, COX8 and NDUFA4, which are encoded in the nuclear genome. The complex exists as a monomer or a dimer and forms supercomplexes (SCs) in the inner mitochondrial membrane with NADH-ubiquinone oxidoreductase (complex I, CI) and ubiquinol-cytochrome c oxidoreductase (cytochrome b-c1 complex, complex III, CIII), resulting in different assemblies (supercomplex SCI(1)III(2)IV(1) and megacomplex MCI(2)III(2)IV(2)). Found in a complex with TMEM177, COA6, COX18, COX20, SCO1 and SCO2. Interacts with TMEM177 in a COX20-dependent manner. Interacts with COX20. Interacts with COX16. The cofactor is Cu cation.

Its subcellular location is the mitochondrion inner membrane. It catalyses the reaction 4 Fe(II)-[cytochrome c] + O2 + 8 H(+)(in) = 4 Fe(III)-[cytochrome c] + 2 H2O + 4 H(+)(out). Its function is as follows. Component of the cytochrome c oxidase, the last enzyme in the mitochondrial electron transport chain which drives oxidative phosphorylation. The respiratory chain contains 3 multisubunit complexes succinate dehydrogenase (complex II, CII), ubiquinol-cytochrome c oxidoreductase (cytochrome b-c1 complex, complex III, CIII) and cytochrome c oxidase (complex IV, CIV), that cooperate to transfer electrons derived from NADH and succinate to molecular oxygen, creating an electrochemical gradient over the inner membrane that drives transmembrane transport and the ATP synthase. Cytochrome c oxidase is the component of the respiratory chain that catalyzes the reduction of oxygen to water. Electrons originating from reduced cytochrome c in the intermembrane space (IMS) are transferred via the dinuclear copper A center (CU(A)) of subunit 2 and heme A of subunit 1 to the active site in subunit 1, a binuclear center (BNC) formed by heme A3 and copper B (CU(B)). The BNC reduces molecular oxygen to 2 water molecules using 4 electrons from cytochrome c in the IMS and 4 protons from the mitochondrial matrix. In Canis simensis (Ethiopian wolf), this protein is Cytochrome c oxidase subunit 2 (MT-CO2).